The chain runs to 874 residues: Alanine--tRNA ligase (874 aa).

4 residues coordinate Zn(2+): H562, H566, C665, and H669.

The protein belongs to the class-II aminoacyl-tRNA synthetase family. It depends on Zn(2+) as a cofactor.

The protein resides in the cytoplasm. It carries out the reaction tRNA(Ala) + L-alanine + ATP = L-alanyl-tRNA(Ala) + AMP + diphosphate. Functionally, catalyzes the attachment of alanine to tRNA(Ala) in a two-step reaction: alanine is first activated by ATP to form Ala-AMP and then transferred to the acceptor end of tRNA(Ala). Also edits incorrectly charged Ser-tRNA(Ala) and Gly-tRNA(Ala) via its editing domain. The protein is Alanine--tRNA ligase of Pseudomonas entomophila (strain L48).